The primary structure comprises 555 residues: Putative ankyrin repeat protein L283 (555 aa).

ANK repeat units follow at residues 364–389 (TKVN…EDDI), 390–420 (VFKK…DINE), 422–447 (IKLA…KVRC), and 455–488 (GYLE…EGGK).

This chain is Putative ankyrin repeat protein L283, found in Acanthamoeba polyphaga mimivirus (APMV).